Reading from the N-terminus, the 20-residue chain is Juvenile hormone-binding protein (20 aa).

It is found in the secreted. Prevents juvenile hormone from being hydrolyzed by general esterases by combining with it specifically. The protein is Juvenile hormone-binding protein (JHBP) of Bombyx mori (Silk moth).